The primary structure comprises 96 residues: Putative pterin-4-alpha-carbinolamine dehydratase (96 aa).

Belongs to the pterin-4-alpha-carbinolamine dehydratase family.

It carries out the reaction (4aS,6R)-4a-hydroxy-L-erythro-5,6,7,8-tetrahydrobiopterin = (6R)-L-erythro-6,7-dihydrobiopterin + H2O. This is Putative pterin-4-alpha-carbinolamine dehydratase from Paraburkholderia xenovorans (strain LB400).